The primary structure comprises 347 residues: Tsukushi (347 aa).

Residues 1–19 (MASLLCLFFSLLGLAAIGA) form the signal peptide. The region spanning 20 to 61 (VKNCHPQCRCEVETFGLFDSFSLTKVDCSRIGPGNTPVPIPL) is the LRRNT domain. LRR repeat units follow at residues 62 to 83 (DTSHLDLSLNSTTSISDTMLSG), 88 to 109 (TLVSLDLSSNLIAQISPKAFSK), 112 to 133 (YLETLDLSSNALEGLSDGCFTG), 135 to 156 (PLVELDLSENQFKEFNLDLFTT), 160 to 175 (DLPIMVDLSRNLLTSI), 185 to 205 (YIKSLMLAGNQLKTVPKLNGI), 206 to 227 (PLQYLNLDGNLISSIDTGAFDS), 230 to 252 (ELVHLSLSGLSELTLIHPGAFRS), 255 to 277 (NLQALDLSNNSQLKTLNPNVFSG), and 280 to 301 (SLQELNLSNTAVTPLSRTVFMQ). An N-linked (GlcNAc...) asparagine glycan is attached at N285.

In terms of assembly, forms a ternary complex with chordin/CHRD and BMP4.

Its subcellular location is the secreted. Functionally, contributes to various developmental events through its interactions with multiple signaling pathways. Dorsalizing factor which functions as an inhibitor of bone morphogenetic proteins during gastrulation. The protein is Tsukushi (tsku) of Danio rerio (Zebrafish).